A 529-amino-acid chain; its full sequence is Pheophorbide a oxygenase, chloroplastic (529 aa).

Disordered regions lie at residues 1 to 24 and 46 to 72; these read MPVM…RRVP and LRVA…TSSA. A chloroplast-targeting transit peptide spans 1 to 47; that stretch reads MPVMAPTASLLLSPRPLPASRRVPSLPALSASGRLRLRRARADTRLR. Residues 82-194 form the Rieske domain; that stretch reads WYPVSLVEDL…TLVSQGLLFV (113 aa). Residues cysteine 124, histidine 126, cysteine 144, and histidine 147 each contribute to the [2Fe-2S] cluster site.

The cofactor is [2Fe-2S] cluster. Expressed in leaves. Expressed at low levels in roots, stems, panicles and seeds.

Its subcellular location is the plastid. The protein resides in the chloroplast. It carries out the reaction pheophorbide a + 2 reduced [2Fe-2S]-[ferredoxin] + O2 + 2 H(+) = red chlorophyll catabolite + 2 oxidized [2Fe-2S]-[ferredoxin]. Its pathway is porphyrin-containing compound metabolism; chlorophyll degradation. Its function is as follows. Catalyzes the key reaction of chlorophyll catabolism, porphyrin macrocycle cleavage of pheophorbide a (pheide a) to a primary fluorescent catabolite (pFCC). Works in a two-step reaction with red chlorophyll catabolite reductase (RCCR). Creates the intermediate RCC through the opening of the porphyrin macrocycle by the introduction of one atom of molecular oxygen at the alpha-methine bridge. Seems to be specific for pheide a. Belongs to the chlorophyll catabolic enzymes (CCEs). May play a role in senescence and response to wounding. This chain is Pheophorbide a oxygenase, chloroplastic, found in Oryza sativa subsp. japonica (Rice).